The primary structure comprises 212 residues: Pyridoxine/pyridoxamine 5'-phosphate oxidase (212 aa).

Substrate is bound by residues 8-11 and lysine 66; that span reads RRSY. Residues 61-66, 76-77, arginine 82, lysine 83, and glutamine 105 contribute to the FMN site; these read RIVLLK and FT. Residues tyrosine 123, arginine 127, and serine 131 each coordinate substrate. Residues 140 to 141 and tryptophan 184 each bind FMN; that span reads QS. A substrate-binding site is contributed by 190 to 192; the sequence is RLH. Arginine 194 lines the FMN pocket.

Belongs to the pyridoxamine 5'-phosphate oxidase family. In terms of assembly, homodimer. FMN serves as cofactor.

The enzyme catalyses pyridoxamine 5'-phosphate + O2 + H2O = pyridoxal 5'-phosphate + H2O2 + NH4(+). It catalyses the reaction pyridoxine 5'-phosphate + O2 = pyridoxal 5'-phosphate + H2O2. Its pathway is cofactor metabolism; pyridoxal 5'-phosphate salvage; pyridoxal 5'-phosphate from pyridoxamine 5'-phosphate: step 1/1. It functions in the pathway cofactor metabolism; pyridoxal 5'-phosphate salvage; pyridoxal 5'-phosphate from pyridoxine 5'-phosphate: step 1/1. Catalyzes the oxidation of either pyridoxine 5'-phosphate (PNP) or pyridoxamine 5'-phosphate (PMP) into pyridoxal 5'-phosphate (PLP). This chain is Pyridoxine/pyridoxamine 5'-phosphate oxidase, found in Cupriavidus necator (strain ATCC 17699 / DSM 428 / KCTC 22496 / NCIMB 10442 / H16 / Stanier 337) (Ralstonia eutropha).